Reading from the N-terminus, the 249-residue chain is Sugar fermentation stimulation protein homolog (249 aa).

It belongs to the SfsA family.

The protein is Sugar fermentation stimulation protein homolog of Synechococcus sp. (strain CC9902).